Reading from the N-terminus, the 332-residue chain is Ribosomal RNA small subunit methyltransferase C (332 aa).

Belongs to the methyltransferase superfamily. RsmC family. As to quaternary structure, monomer.

It localises to the cytoplasm. The catalysed reaction is guanosine(1207) in 16S rRNA + S-adenosyl-L-methionine = N(2)-methylguanosine(1207) in 16S rRNA + S-adenosyl-L-homocysteine + H(+). Functionally, specifically methylates the guanine in position 1207 of 16S rRNA in the 30S particle. In Pseudomonas syringae pv. tomato (strain ATCC BAA-871 / DC3000), this protein is Ribosomal RNA small subunit methyltransferase C.